The following is a 1008-amino-acid chain: Collagen, type I, alpha 1a (1008 aa).

The span at 1 to 21 (SPAMPVPGPMGPMGPRGPPGS) shows a compositional bias: pro residues. Residues 1–920 (SPAMPVPGPM…PQEKAPDPFR (920 aa)) are disordered. Residues 39 to 53 (NGEDGESGKPGRGGE) are compositionally biased toward basic and acidic residues. Positions 92–117 (TPGAMGPRGAAGAAGARGNDGAAGAA) are enriched in low complexity. The segment covering 119–132 (PPGPTGPAGPPGFP) has biased composition (pro residues). Over residues 133 to 151 (GGPGAKGDAGAQGGRGPEG) the composition is skewed to gly residues. Composition is skewed to low complexity over residues 152 to 195 (PAGA…AGAP) and 204 to 230 (SGPQGAAGAPGPKGEAGAKGEAGAPGV). The span at 253–265 (GARGGPGGRGFPG) shows a compositional bias: gly residues. Composition is skewed to low complexity over residues 339–354 (VGARGQPGVMGFPGPK) and 410–422 (LPGEAGATGPAGA). Positions 423–435 (RGDRGFPGERGAK) are enriched in basic and acidic residues. 3 stretches are compositionally biased toward low complexity: residues 437–456 (DAGAPGAPGAQGPPGLQGMP), 489–524 (RGLTGPLGLPGPAGATGDKGESGPAGAVGPAGARGA), and 537–573 (AGFAGPPGADGQPGAKGEAGDNGAKGDAGPPGAAGPT). The segment covering 604 to 617 (PPGPSGNPGPPGPA) has biased composition (pro residues). A compositionally biased stretch (low complexity) spans 634–661 (PAGRPGELGAAGPPGPAGEKGSPGSEGA). The span at 696-709 (GEAGGPSGPGGERG) shows a compositional bias: gly residues. The span at 717–735 (PGLAGAPGEPGREGSPGNE) shows a compositional bias: low complexity. The span at 761 to 771 (APGPPGAPGPV) shows a compositional bias: pro residues. Low complexity predominate over residues 785 to 806 (PAGPAGSAGPSGPRGPAGAPGL). Positions 807 to 821 (RGDKGESGEAGERRG) are enriched in basic and acidic residues. Positions 832–868 (SGSSGEQGPAGAAGPAGPRGPAGSAGSPGKDGMSGLP) are enriched in low complexity. The segment covering 884-896 (AGPPGPPGPPGAP) has biased composition (pro residues). One can recognise a Fibrillar collagen NC1 domain in the interval 978 to 1008 (TSRLPLLDLAPMDVGAPDQEFGLEVGPVCFL).

It belongs to the fibrillar collagen family.

It is found in the secreted. The protein resides in the extracellular space. Its subcellular location is the extracellular matrix. This is Collagen, type I, alpha 1a from Epinephelus aeneus (White grouper).